We begin with the raw amino-acid sequence, 867 residues long: Zinc finger protein zfp-1 (867 aa).

The PHD-type 1 zinc finger occupies 5–57 (VGGCCVCADENGWTDNPLIYCDGENCEVAVHQGCYGIQEVPEGEWFCAKCTKA). Residues 69–102 (TFCCQLCPFDYGALKKTDRNGWAHVICALYIPEV) form a C2HC pre-PHD-type 2 zinc finger. The extended PHD2 domain (ePHD2) stretch occupies residues 69 to 186 (TFCCQLCPFD…KYCGYCENHL (118 aa)). A PHD-type 2 zinc finger spans residues 125 to 186 (KLCYICNEER…KYCGYCENHL (62 aa)). 4 disordered regions span residues 267–311 (GSTV…SLSS), 440–477 (KNDM…GKSP), 503–586 (ADRT…QSNR), and 753–773 (SSGA…STAG). Positions 285–311 (PLTTSSRSSVAQDPSPPLTINKNSLSS) are enriched in polar residues. Over residues 503–512 (ADRTAAERRA) the composition is skewed to basic and acidic residues. Polar residues predominate over residues 516 to 527 (QSQPSTSTNGGP). The segment covering 538-550 (HTNSTNSTNHQNN) has biased composition (low complexity). Residues 551–573 (GLTQNAPASTSMQAGTSSNDGVI) show a composition bias toward polar residues. Residues 574-585 (SQNGTSSTSQSN) are compositionally biased toward low complexity. Over residues 758 to 771 (VNSNIQNHRATPST) the composition is skewed to polar residues.

Multimer; in vitro. Interacts (via C-terminus) with dot-1.1 to form a heterodimer known as the zfp-1-dot-1.1 complex or DotCom complex. As to expression, isoform a: Expressed at high levels in maturing oocytes, but at low levels in the rest of the germ line (at protein level). Isoform a: Not expressed in the pharynx, germ line and tail. Isoform c: Not expressed in the germ line (at protein level). Isoform c: Uniformly expressed.

The protein localises to the nucleus. Its subcellular location is the chromosome. Its function is as follows. Recruits the histone methyltransferase dot-1.1 to chromatin to methylate 'Lys-79' of histone H3 and activate transcription. Recognizes and binds histone H3 methylated at 'Lys-4' (H3K4me) at the promoters of target genes. During stress, the zfp-1-dot-1.1 complex also plays a role in the deubiquitination of histone H2B sites, which negatively modulates the RNA polymerase II-induced transcription of highly expressed genes. In response to stress, binds to the pdk-1 promoter to negatively regulate pdk-1 expression, which negatively modulates daf-16/FOXO-mediated gene expression. Thus, most likely via this mechanism, in response to stress, it confers a protective role against neuronal necrosis. Plays a role in Insulin/IGF-1-like signaling (IIS)- and diet restriction-mediated lifespan extension by controlling daf-16/FOXO and pha-4/FOXA recruitment to target promoters. May negatively regulate the expression of genes required for vulval development. May play a role in axon guidance in D-type motor neurons. May suppress sensitivity to RNAi. Functionally, required for migration of HSN motor neurons during embryogenesis. This is Zinc finger protein zfp-1 from Caenorhabditis elegans.